Here is an 830-residue protein sequence, read N- to C-terminus: Venom phosphodiesterase (830 aa).

2 consecutive SMB domains span residues 7 to 50 (PLES…VLPT) and 51 to 95 (QSWS…RETS). 16 cysteine pairs are disulfide-bonded: C11-C15, C11-C28, C15-C46, C26-C28, C26-C39, C32-C38, C39-C46, C55-C60, C55-C72, C60-C90, C70-C72, C70-C83, C76-C82, C83-C90, C101-C147, and C109-C321. N16 carries an N-linked (GlcNAc...) asparagine glycan. The Cell attachment site signature appears at 35–37 (RKA). A divalent metal cation is bound by residues D124 and T162. The active-site AMP-threonine intermediate is the T162. 3 N-linked (GlcNAc...) asparagine glycosylation sites follow: N193, N236, and N247. Residue K248 participates in AMP binding. Positions 282, 286, 329, and 330 each coordinate a divalent metal cation. Residue H286 coordinates AMP. 6 disulfide bridges follow: C337/C434, C385/C772, C518/C575, C531/C632, C533/C617, and C740/C750. H439 is a binding site for a divalent metal cation. Residue N489 is glycosylated (N-linked (GlcNAc...) asparagine). N-linked (GlcNAc...) asparagine glycosylation is found at N723 and N742.

This sequence belongs to the nucleotide pyrophosphatase/phosphodiesterase family. As to quaternary structure, monomer cleaved in two subunits; disulfide-linked. Is synthesized as a single-chain protein and is subsequently cleaved to form a two-subunit protein held together with disulfide bonds. Requires a divalent metal cation as cofactor. As to expression, expressed by venom gland.

It is found in the secreted. It catalyses the reaction ADP + H2O = AMP + phosphate + H(+). Its function is as follows. Hydrolyzes ADP with high activity. Shows weak or no activity on 5'-AMP, 5'-GMP, 3'-AMP, ATP, cAMP, and cGMP. Is devoid of monophosphatase and proteinase activities. Dose-dependently inhibits platelet aggregation induced by ADP and collagen. This chain is Venom phosphodiesterase, found in Naja atra (Chinese cobra).